Consider the following 74-residue polypeptide: UPF0346 protein YozE (74 aa).

This sequence belongs to the UPF0346 family.

The chain is UPF0346 protein YozE (yozE) from Bacillus subtilis (strain 168).